We begin with the raw amino-acid sequence, 309 residues long: Probable copper-dependent oxygenase clz3 (309 aa).

2 N-linked (GlcNAc...) asparagine glycosylation sites follow: asparagine 9 and asparagine 249. The helical transmembrane segment at phenylalanine 257–isoleucine 277 threads the bilayer.

The protein belongs to the clz3 oxygenase family.

Its subcellular location is the membrane. It participates in secondary metabolite biosynthesis. Probable copper-dependent oxygenase; part of the gene cluster that mediates the biosynthesis of squalestatin S1 (SQS1, also known as zaragozic acid A), a heavily oxidized fungal polyketide that offers potent cholesterol lowering activity by targeting squalene synthase (SS). SQS1 is composed of a 2,8-dioxobicyclic[3.2.1]octane-3,4,5-tricarboxyclic acid core that is connected to two lipophilic polyketide arms. These initial steps feature the priming of an unusual benzoic acid starter unit onto the highly reducing polyketide synthase clz14, followed by oxaloacetate extension and product release to generate a tricarboxylic acid containing product. The phenylalanine ammonia lyase (PAL) clz10 and the acyl-CoA ligase clz12 are involved in transforming phenylalanine into benzoyl-CoA. The citrate synthase-like protein clz17 is involved in connecting the C-alpha-carbons of the hexaketide chain and oxaloacetate to afford the tricarboxylic acid unit. The potential hydrolytic enzymes, clz11 and clz13, are in close proximity to pks2 and may participate in product release. On the other side, the tetraketide arm is synthesized by a the squalestatin tetraketide synthase clz2 and enzymatically esterified to the core in the last biosynthetic step, by the acetyltransferase clz6. The biosynthesis of the tetraketide must involve 3 rounds of chain extension. After the first and second rounds methyl-transfer occurs, and in all rounds of extension the ketoreductase and dehydratase are active. The enoyl reductase and C-MeT of clz2 are not active in the final round of extension. The acetyltransferase clz6 appears to have a broad substrate selectivity for its acyl CoA substrate, allowing the in vitro synthesis of novel squalestatins. The biosynthesis of SQS1 requires several oxidative steps likely performed by oxidoreductases clz3, clz15 and clz16. Finally, in support of the identification of the cluster as being responsible for SQS1 production, the cluster contains a gene encoding a putative squalene synthase (SS) clz20, suggesting a likely mechanism for self-resistance. The sequence is that of Probable copper-dependent oxygenase clz3 from Cochliobolus lunatus (Filamentous fungus).